We begin with the raw amino-acid sequence, 170 residues long: Protein SprT (170 aa).

Positions 23 to 165 (QLANQHLGTD…RECGEKLQFV (143 aa)) constitute a SprT-like domain. His78 is a binding site for Zn(2+). The active site involves Glu79. Position 82 (His82) interacts with Zn(2+).

Belongs to the SprT family. Zn(2+) is required as a cofactor.

The protein resides in the cytoplasm. The sequence is that of Protein SprT from Yersinia enterocolitica serotype O:8 / biotype 1B (strain NCTC 13174 / 8081).